Consider the following 446-residue polypeptide: tRNA-2-methylthio-N(6)-dimethylallyladenosine synthase (446 aa).

The MTTase N-terminal domain occupies 5-121 (RRFYIQTFGC…LPSLIDDAAS (117 aa)). [4Fe-4S] cluster contacts are provided by cysteine 14, cysteine 50, cysteine 84, cysteine 157, cysteine 161, and cysteine 164. In terms of domain architecture, Radical SAM core spans 143 to 373 (REGRISAFIP…IDLQQEISAE (231 aa)). Residues 376–439 (RRQVGTVAEV…SATLSGSREG (64 aa)) enclose the TRAM domain.

The protein belongs to the methylthiotransferase family. MiaB subfamily. Monomer. The cofactor is [4Fe-4S] cluster.

It is found in the cytoplasm. It carries out the reaction N(6)-dimethylallyladenosine(37) in tRNA + (sulfur carrier)-SH + AH2 + 2 S-adenosyl-L-methionine = 2-methylsulfanyl-N(6)-dimethylallyladenosine(37) in tRNA + (sulfur carrier)-H + 5'-deoxyadenosine + L-methionine + A + S-adenosyl-L-homocysteine + 2 H(+). In terms of biological role, catalyzes the methylthiolation of N6-(dimethylallyl)adenosine (i(6)A), leading to the formation of 2-methylthio-N6-(dimethylallyl)adenosine (ms(2)i(6)A) at position 37 in tRNAs that read codons beginning with uridine. This Chlorobium luteolum (strain DSM 273 / BCRC 81028 / 2530) (Pelodictyon luteolum) protein is tRNA-2-methylthio-N(6)-dimethylallyladenosine synthase.